The primary structure comprises 345 residues: Probable galacturonosyltransferase-like 3 (345 aa).

Over 1–7 (MSSLRLR) the chain is Cytoplasmic. The helical; Signal-anchor for type II membrane protein transmembrane segment at 8–28 (LCLLLLLPITISCVTVTLTDL) threads the bilayer. Over 29 to 345 (PAFREAPAFR…FRYSPLISDS (317 aa)) the chain is Lumenal. Residue asparagine 197 is glycosylated (N-linked (GlcNAc...) asparagine).

The protein belongs to the glycosyltransferase 8 family.

Its subcellular location is the golgi apparatus membrane. Its pathway is glycan metabolism; pectin biosynthesis. Its function is as follows. May be involved in pectin and/or xylans biosynthesis in cell walls. The sequence is that of Probable galacturonosyltransferase-like 3 (GATL3) from Arabidopsis thaliana (Mouse-ear cress).